A 293-amino-acid polypeptide reads, in one-letter code: Pyridoxal 5'-phosphate synthase subunit PdxS (293 aa).

Residue D23 participates in D-ribose 5-phosphate binding. Residue K80 is the Schiff-base intermediate with D-ribose 5-phosphate of the active site. A D-ribose 5-phosphate-binding site is contributed by G152. Position 164 (R164) interacts with D-glyceraldehyde 3-phosphate. D-ribose 5-phosphate is bound by residues G213 and 234-235 (GS).

The protein belongs to the PdxS/SNZ family. In the presence of PdxT, forms a dodecamer of heterodimers.

It carries out the reaction aldehydo-D-ribose 5-phosphate + D-glyceraldehyde 3-phosphate + L-glutamine = pyridoxal 5'-phosphate + L-glutamate + phosphate + 3 H2O + H(+). The protein operates within cofactor biosynthesis; pyridoxal 5'-phosphate biosynthesis. Catalyzes the formation of pyridoxal 5'-phosphate from ribose 5-phosphate (RBP), glyceraldehyde 3-phosphate (G3P) and ammonia. The ammonia is provided by the PdxT subunit. Can also use ribulose 5-phosphate and dihydroxyacetone phosphate as substrates, resulting from enzyme-catalyzed isomerization of RBP and G3P, respectively. The chain is Pyridoxal 5'-phosphate synthase subunit PdxS from Herpetosiphon aurantiacus (strain ATCC 23779 / DSM 785 / 114-95).